Consider the following 145-residue polypeptide: Transcription antitermination protein NusB (145 aa).

The protein belongs to the NusB family.

In terms of biological role, involved in transcription antitermination. Required for transcription of ribosomal RNA (rRNA) genes. Binds specifically to the boxA antiterminator sequence of the ribosomal RNA (rrn) operons. This Acidothermus cellulolyticus (strain ATCC 43068 / DSM 8971 / 11B) protein is Transcription antitermination protein NusB.